Reading from the N-terminus, the 190-residue chain is Zinc metalloproteinase/disintegrin (190 aa).

The region spanning 1–11 (NHNPECIVNEP) is the Peptidase M12B domain. Residues 19 to 105 (PPVCGNELLE…ECPADVFHKN (87 aa)) form the Disintegrin domain. The Ca(2+) site is built by Val-21, Asn-24, Leu-26, Glu-28, Glu-31, and Asp-34. Disulfide bonds link Cys-33/Cys-51, Cys-35/Cys-46, Cys-45/Cys-68, Cys-59/Cys-65, Cys-64/Cys-90, and Cys-77/Cys-97. A D/ECD-tripeptide motif is present at residues 83–85 (ECD). The Ca(2+) site is built by Asp-85, Pro-86, Glu-88, Asp-100, and Val-101. A propeptide spanning residues 104 to 190 (KNGQPCLDNY…DNSPGQNGPC (87 aa)) is cleaved from the precursor.

It belongs to the venom metalloproteinase (M12B) family. P-III subfamily. In terms of assembly, monomer. Zn(2+) serves as cofactor. In terms of tissue distribution, expressed by the venom gland.

It is found in the secreted. Impairs hemostasis in the envenomed animal. Functionally, inhibits platelet aggregation induced by ADP, thrombin, platelet-activating factor and collagen. Acts by inhibiting fibrinogen interaction with platelet receptors GPIIb/GPIIIa (ITGA2B/ITGB3). The chain is Zinc metalloproteinase/disintegrin from Gloydius brevicauda (Korean slamosa snake).